The chain runs to 570 residues: Sulfite reductase [NADPH] hemoprotein beta-component (570 aa).

Residues cysteine 434, cysteine 440, cysteine 479, and cysteine 483 each contribute to the [4Fe-4S] cluster site. Cysteine 483 lines the siroheme pocket.

Belongs to the nitrite and sulfite reductase 4Fe-4S domain family. In terms of assembly, alpha(8)-beta(8). The alpha component is a flavoprotein, the beta component is a hemoprotein. Requires siroheme as cofactor. The cofactor is [4Fe-4S] cluster.

It carries out the reaction hydrogen sulfide + 3 NADP(+) + 3 H2O = sulfite + 3 NADPH + 4 H(+). It participates in sulfur metabolism; hydrogen sulfide biosynthesis; hydrogen sulfide from sulfite (NADPH route): step 1/1. Component of the sulfite reductase complex that catalyzes the 6-electron reduction of sulfite to sulfide. This is one of several activities required for the biosynthesis of L-cysteine from sulfate. In Escherichia coli O6:H1 (strain CFT073 / ATCC 700928 / UPEC), this protein is Sulfite reductase [NADPH] hemoprotein beta-component.